A 193-amino-acid chain; its full sequence is Rho-related protein racF1 (193 aa).

10–17 (GDGAVGKT) contacts GTP. The short motif at 32–40 (YIPTVFDNY) is the Effector region element. GTP-binding positions include 57-61 (DTAGQ) and 115-118 (TKQD). Position 190 is a cysteine methyl ester (cysteine 190). The S-geranylgeranyl cysteine moiety is linked to residue cysteine 190. Positions 191–193 (TIM) are cleaved as a propeptide — removed in mature form.

It belongs to the small GTPase superfamily. Rho family. In terms of assembly, interacts with pakB.

It localises to the membrane. Functionally, might act in concert and/or share functions with other members of the RHO family in the regulation of a subset of cytoskeletal rearrangements that are required for these processes. This is Rho-related protein racF1 (racF1) from Dictyostelium discoideum (Social amoeba).